The following is a 113-amino-acid chain: U11-theraphotoxin-Hhn1a (113 aa).

Residues 1 to 21 (MNTVRVTFLLVFVLAVSLGQA) form the signal peptide. The propeptide occupies 22–74 (DKDENRMEMQEKTEQGKGYLDFAENLLPQKLEELEAKLLEEDSEESRNSRQKR). Positions 59 to 69 (LLEEDSEESRN) are enriched in basic and acidic residues. Residues 59–83 (LLEEDSEESRNSRQKRCIGEGVPCD) are disordered. Disulfide bonds link cysteine 75–cysteine 90, cysteine 82–cysteine 95, and cysteine 89–cysteine 110.

Belongs to the neurotoxin 14 (magi-1) family. 01 (HNTX-16) subfamily. Expressed by the venom gland.

The protein resides in the secreted. Its function is as follows. Probable ion channel inhibitor. The sequence is that of U11-theraphotoxin-Hhn1a from Cyriopagopus hainanus (Chinese bird spider).